The primary structure comprises 310 residues: Ribosomal RNA small subunit methyltransferase H (310 aa).

S-adenosyl-L-methionine is bound by residues Ala-32–His-34, Asp-51, Phe-84, Asp-102, and Gln-109.

The protein belongs to the methyltransferase superfamily. RsmH family.

It localises to the cytoplasm. The catalysed reaction is cytidine(1402) in 16S rRNA + S-adenosyl-L-methionine = N(4)-methylcytidine(1402) in 16S rRNA + S-adenosyl-L-homocysteine + H(+). Specifically methylates the N4 position of cytidine in position 1402 (C1402) of 16S rRNA. The chain is Ribosomal RNA small subunit methyltransferase H from Campylobacter hominis (strain ATCC BAA-381 / DSM 21671 / CCUG 45161 / LMG 19568 / NCTC 13146 / CH001A).